We begin with the raw amino-acid sequence, 511 residues long: GMP synthase [glutamine-hydrolyzing] (511 aa).

The 191-residue stretch at Asp5–Val195 folds into the Glutamine amidotransferase type-1 domain. The active-site Nucleophile is the Cys82. Active-site residues include His169 and Glu171. The GMPS ATP-PPase domain maps to Trp196–Arg386. Residue Ser223–Ser229 participates in ATP binding.

As to quaternary structure, homodimer.

It carries out the reaction XMP + L-glutamine + ATP + H2O = GMP + L-glutamate + AMP + diphosphate + 2 H(+). It participates in purine metabolism; GMP biosynthesis; GMP from XMP (L-Gln route): step 1/1. Catalyzes the synthesis of GMP from XMP. The sequence is that of GMP synthase [glutamine-hydrolyzing] from Campylobacter lari (strain RM2100 / D67 / ATCC BAA-1060).